A 55-amino-acid chain; its full sequence is Large ribosomal subunit protein bL33A (55 aa).

The protein belongs to the bacterial ribosomal protein bL33 family.

This Mycobacterium ulcerans (strain Agy99) protein is Large ribosomal subunit protein bL33A.